The sequence spans 418 residues: MRFSQATVLAFAALSLAAPAFEADNKNIKREDCDKTSFHGHHKHKRAVAYDYAYVTVTVDGNGNPITTVSPVLSIETIAKSEETSSTSTSISSTTTIVQNDSLTSDEPKTLSLPSGTIKPSSFATESQSQSQSSSTGGSGSGSTNGIEGDLAAFEDPTEEFEDGVLSCSDFPSGQGVIPLDHLGFGGWSGIENSDGSTGGNCKEGSYCSYACQSGMSKTQWPEDQPSNGVSIGGLLCKNGKLYKSSTRSNYLCEWGVKKANVVNKLSETVAICRTDYPGTENMVIPTVVGGGSTSVITVVDQSTYYTWRGGATSAQYYVNNAGVSWEDGCVWGTPGSGVGNWAPLNFGAGYANGIAYLSLIPNPNNRDSLNFKVKIVGESGSTVSGSCSYANGKFNGNSDDGCTVGVTSGEADFVLYN.

An N-terminal signal peptide occupies residues 1–23 (MRFSQATVLAFAALSLAAPAFEA). Over residues 81 to 97 (SEETSSTSTSISSTTTI) the composition is skewed to low complexity. The tract at residues 81 to 150 (SEETSSTSTS…SGSTNGIEGD (70 aa)) is disordered. The N-linked (GlcNAc...) asparagine glycan is linked to asparagine 100. The span at 112-126 (SLPSGTIKPSSFATE) shows a compositional bias: polar residues. Residues 127 to 136 (SQSQSQSSST) show a composition bias toward low complexity.

This sequence belongs to the SUN family. In terms of processing, predicted to be a substrate for cleavage by KEX2.

The protein resides in the secreted. It is found in the cell wall. Cell surface beta-glucosidase involved in cytokinesis, cell wall biogenesis, adhesion to host tissue, and biofilm formation; thus playing an important role in the host-pathogen interaction. Has hydrolytic activity on linear (1-&gt;3)-beta-D-glucans such as laminaribiose and other laminarioligosaccharides. This is Secreted beta-glucosidase SUN41 from Candida albicans (strain SC5314 / ATCC MYA-2876) (Yeast).